A 281-amino-acid polypeptide reads, in one-letter code: Putative thiosulfate sulfurtransferase (281 aa).

2 Rhodanese domains span residues 18-125 (NTDG…ELTK) and 154-274 (AIGN…VPIE). Cys-233 acts as the Cysteine persulfide intermediate in catalysis. Residue Arg-238 participates in substrate binding.

It carries out the reaction thiosulfate + hydrogen cyanide = thiocyanate + sulfite + 2 H(+). May be a sulfotransferase involved in the formation of thiosulfate. This Saccharopolyspora erythraea (Streptomyces erythraeus) protein is Putative thiosulfate sulfurtransferase (cysA).